Reading from the N-terminus, the 348-residue chain is tRNA N6-adenosine threonylcarbamoyltransferase (348 aa).

The Fe cation site is built by His116 and His120. Substrate is bound by residues 138–142 (IISGG), Asp171, Gly184, and Asn282. Residue Asp310 coordinates Fe cation.

Belongs to the KAE1 / TsaD family. Requires Fe(2+) as cofactor.

It is found in the cytoplasm. It carries out the reaction L-threonylcarbamoyladenylate + adenosine(37) in tRNA = N(6)-L-threonylcarbamoyladenosine(37) in tRNA + AMP + H(+). In terms of biological role, required for the formation of a threonylcarbamoyl group on adenosine at position 37 (t(6)A37) in tRNAs that read codons beginning with adenine. Is involved in the transfer of the threonylcarbamoyl moiety of threonylcarbamoyl-AMP (TC-AMP) to the N6 group of A37, together with TsaE and TsaB. TsaD likely plays a direct catalytic role in this reaction. The polypeptide is tRNA N6-adenosine threonylcarbamoyltransferase (Ehrlichia ruminantium (strain Welgevonden)).